A 296-amino-acid chain; its full sequence is NAD kinase (296 aa).

Residue Asp73 is the Proton acceptor of the active site. NAD(+) is bound by residues 73-74, Lys78, 151-152, Arg178, Asp180, and 191-196; these read DG, NE, and TAHAMS.

Belongs to the NAD kinase family. The cofactor is a divalent metal cation.

It localises to the cytoplasm. The enzyme catalyses NAD(+) + ATP = ADP + NADP(+) + H(+). Its function is as follows. Involved in the regulation of the intracellular balance of NAD and NADP, and is a key enzyme in the biosynthesis of NADP. Catalyzes specifically the phosphorylation on 2'-hydroxyl of the adenosine moiety of NAD to yield NADP. This chain is NAD kinase, found in Francisella tularensis subsp. mediasiatica (strain FSC147).